The following is a 420-amino-acid chain: Subtilisin-like protease 7 (420 aa).

The first 20 residues, 1-20 (MGFITKAIPLALAAASVING), serve as a signal peptide directing secretion. Residues 21 to 119 (AEIMETRAGV…IERDARVQIN (99 aa)) constitute a propeptide that is removed on maturation. The 83-residue stretch at 36–118 (KYIVVMNDGM…YIERDARVQI (83 aa)) folds into the Inhibitor I9 domain. The Peptidase S8 domain occupies 129-413 (SWGLARVGSK…SFPLNIYEEQ (285 aa)). Residues D161 and H192 each act as charge relay system in the active site. 2 N-linked (GlcNAc...) asparagine glycosylation sites follow: N222 and N252. The active-site Charge relay system is the S346. N396 is a glycosylation site (N-linked (GlcNAc...) asparagine).

It belongs to the peptidase S8 family.

The protein resides in the secreted. Its function is as follows. Secreted subtilisin-like serine protease with keratinolytic activity that contributes to pathogenicity. This Arthroderma benhamiae (strain ATCC MYA-4681 / CBS 112371) (Trichophyton mentagrophytes) protein is Subtilisin-like protease 7 (SUB7).